We begin with the raw amino-acid sequence, 488 residues long: Cobyric acid synthase (488 aa).

The GATase cobBQ-type domain maps to 248–435 (VLKVVVPVLP…LHGLFESPAA (188 aa)). Cys329 acts as the Nucleophile in catalysis. Residue His427 is part of the active site.

The protein belongs to the CobB/CobQ family. CobQ subfamily.

It functions in the pathway cofactor biosynthesis; adenosylcobalamin biosynthesis. Functionally, catalyzes amidations at positions B, D, E, and G on adenosylcobyrinic A,C-diamide. NH(2) groups are provided by glutamine, and one molecule of ATP is hydrogenolyzed for each amidation. The protein is Cobyric acid synthase of Pseudomonas fluorescens (strain Pf0-1).